A 400-amino-acid polypeptide reads, in one-letter code: MAAEIQPQPLTRKPILLQRVEGSQEVVNMAVIVPKEEGVISVSEDRTVRVWLKRDSGQYWPSIYHAMPSPCSCMSFNPETRRLSIGLDNGTISEFILSEDYNKMTPVKNYQAHQSRVTMVLFVLELEWVLSTGQDKQFAWHCSESGQRLGGYRTSAVASGLQFDVETRHVFIGDHSGQVTILKLEQENCTLLTSFRGHTGGVTALCWDPVQRVLFSGSSDHSVIMWDIGGRKGTAIELQGHNDKVQALSYAQHTRQLISCGGDGGIVVWNMDVERQETPEWLDSDSCQKCDQPFFWNFKQMWDSKKIGLRQHHCRKCGKAVCGKCSSKRSSIPLMGFEFEVRVCDSCHEAITDEERAPTATFHDSKHNIVHVHFDATRGWLLTSGTDKVIKLWDMTPVVS.

WD repeat units follow at residues 22 to 61, 66 to 105, 112 to 150, 153 to 192, 197 to 236, and 240 to 279; these read GSQE…QYWP, AMPS…NKMT, AHQS…QRLG, RTSA…CTLL, GHTG…GTAI, and GHND…QETP. An FYVE-type zinc finger spans residues 281–352; that stretch reads WLDSDSCQKC…VCDSCHEAIT (72 aa). Residues cysteine 287, cysteine 290, cysteine 314, cysteine 317, cysteine 322, cysteine 325, cysteine 344, and cysteine 347 each coordinate Zn(2+). The WD 7 repeat unit spans residues 364–399; that stretch reads DSKHNIVHVHFDATRGWLLTSGTDKVIKLWDMTPVV.

Homodimer. Interacts (via WD repeats 1-3) with AKT1, AKT2, PRKCZ and PRKCI. Interacts with VAMP2. Forms a complex with VAMP2 and PRKCZ. Interacts with FOXO1. Forms a complex with AKT1 and FOXO1. In terms of tissue distribution, highly expressed in the brain (at protein level).

The protein localises to the endosome. It is found in the early endosome. The protein resides in the cytoplasm. Functionally, acts in an adapter protein-like fashion to mediate the interaction between the kinase PRKCZ and its substrate VAMP2 and increases the PRKCZ-dependent phosphorylation of VAMP2. Positively regulates adipocyte differentiation, by facilitating the phosphorylation and thus inactivation of the anti-adipogenetic transcription factor FOXO1 by the kinase AKT1. Plays a role in endosomal control of AKT2 signaling; required for insulin-stimulated AKT2 phosphorylation and glucose uptake and insulin-stimulated phosphorylation of AKT2 substrates. Participates in transferrin receptor endocytosis. This Mus musculus (Mouse) protein is WD repeat and FYVE domain-containing protein 2 (Wdfy2).